The sequence spans 458 residues: MNTFEILTFECETGNYHTFCPISCVAWLYQKIEDSFFLVIGTKTCGYFLQNALGVMIFAEPRYAMAELEEGDISAQLNDHEELKRLCLHIKKDRNPSVIVWIGTCTTEIIKMDLEGIAPKVETEIGIPIVVARANGLDYAFTQGEDTVLAAITHRCPEYKSWVDEEDGTEKKVLSVYSERNRDETFKSPNHPPLVLFGSVPSTVASQLDSELKRQSIRVSGWLPAQRYTELPSLGEEVYVCGVNPFLSRTATTLMRRRKCKLIGAPFPIGPDGTRAWIEKICSVFGIKPQGLEERETQIWNNLKDYLDLLRGKSVFFMGDNLLEVSLARFLIRCGMIVYEIGIPYMDKRYQAAELSLLQDTCKKMHIPMPRIVEKPDNYNQIQRMRELQPDLAITGMAHANPLEARGINTKWSVEFTFAQIHGFTNAKDVLELVTRPLRRNNSLEHLGWTNLLQPTII.

Residues Cys20, Cys45, and Cys105 each contribute to the [4Fe-4S] cluster site.

This sequence belongs to the BchN/ChlN family. As to quaternary structure, protochlorophyllide reductase is composed of three subunits; ChlL, ChlN and ChlB. Forms a heterotetramer of two ChlB and two ChlN subunits. It depends on [4Fe-4S] cluster as a cofactor.

The protein resides in the plastid. It localises to the chloroplast. The enzyme catalyses chlorophyllide a + oxidized 2[4Fe-4S]-[ferredoxin] + 2 ADP + 2 phosphate = protochlorophyllide a + reduced 2[4Fe-4S]-[ferredoxin] + 2 ATP + 2 H2O. It functions in the pathway porphyrin-containing compound metabolism; chlorophyll biosynthesis (light-independent). Its function is as follows. Component of the dark-operative protochlorophyllide reductase (DPOR) that uses Mg-ATP and reduced ferredoxin to reduce ring D of protochlorophyllide (Pchlide) to form chlorophyllide a (Chlide). This reaction is light-independent. The NB-protein (ChlN-ChlB) is the catalytic component of the complex. This Angiopteris evecta (Mule's foot fern) protein is Light-independent protochlorophyllide reductase subunit N.